The sequence spans 282 residues: ATP synthase gamma chain (282 aa).

This sequence belongs to the ATPase gamma chain family. In terms of assembly, F-type ATPases have 2 components, CF(1) - the catalytic core - and CF(0) - the membrane proton channel. CF(1) has five subunits: alpha(3), beta(3), gamma(1), delta(1), epsilon(1). CF(0) has three main subunits: a, b and c.

The protein localises to the cell membrane. Produces ATP from ADP in the presence of a proton gradient across the membrane. The gamma chain is believed to be important in regulating ATPase activity and the flow of protons through the CF(0) complex. This is ATP synthase gamma chain from Clostridium botulinum (strain Loch Maree / Type A3).